A 275-amino-acid chain; its full sequence is Chlorophyll a-b binding protein 3, chloroplastic (275 aa).

Trp58 contacts chlorophyll b. 3 residues coordinate chlorophyll a: Phe78, Ser84, and Glu102. Chlorophyll b contacts are provided by Arg107, Ile142, Glu169, and Arg172. Positions 226, 227, 230, 232, 244, and 259 each coordinate chlorophyll a. Residues 233–253 form a helical membrane-spanning segment; that stretch reads LAMLAILGYFIQGLVTGVGPY.

The protein belongs to the light-harvesting chlorophyll a/b-binding (LHC) protein family. As to quaternary structure, the LHC complex consists of chlorophyll a-b binding proteins. Requires Binds at least 14 chlorophylls (8 Chl-a and 6 Chl-b) and carotenoids such as lutein and neoxanthin. as cofactor. Photoregulated by reversible phosphorylation of its threonine residues.

The protein localises to the plastid. The protein resides in the chloroplast thylakoid membrane. The light-harvesting complex (LHC) functions as a light receptor, it captures and delivers excitation energy to photosystems with which it is closely associated. In terms of biological role, may channel protons produced in the catalytic Mn center of water oxidation into the thylakoid lumen. The sequence is that of Chlorophyll a-b binding protein 3, chloroplastic from Pisum sativum (Garden pea).